Reading from the N-terminus, the 436-residue chain is Phosphoribosylamine--glycine ligase (436 aa).

Residues 106 to 318 (RKLFEDYRIP…MLEICEGIVD (213 aa)) form the ATP-grasp domain. 133 to 196 (MEDFDSEAVV…EERVVGEEFT (64 aa)) serves as a coordination point for ATP. The Mg(2+) site is built by Q276, E288, and N290. Q276, E288, and N290 together coordinate Mn(2+).

The protein belongs to the GARS family. Mg(2+) is required as a cofactor. It depends on Mn(2+) as a cofactor.

The enzyme catalyses 5-phospho-beta-D-ribosylamine + glycine + ATP = N(1)-(5-phospho-beta-D-ribosyl)glycinamide + ADP + phosphate + H(+). Its pathway is purine metabolism; IMP biosynthesis via de novo pathway; N(1)-(5-phospho-D-ribosyl)glycinamide from 5-phospho-alpha-D-ribose 1-diphosphate: step 2/2. This is Phosphoribosylamine--glycine ligase from Methanothermobacter thermautotrophicus (strain ATCC 29096 / DSM 1053 / JCM 10044 / NBRC 100330 / Delta H) (Methanobacterium thermoautotrophicum).